A 146-amino-acid polypeptide reads, in one-letter code: Large ribosomal subunit protein uL13 (146 aa).

Residues Ala-126–Gly-146 form a disordered region.

Belongs to the universal ribosomal protein uL13 family. Part of the 50S ribosomal subunit.

In terms of biological role, this protein is one of the early assembly proteins of the 50S ribosomal subunit, although it is not seen to bind rRNA by itself. It is important during the early stages of 50S assembly. The sequence is that of Large ribosomal subunit protein uL13 from Roseiflexus castenholzii (strain DSM 13941 / HLO8).